Reading from the N-terminus, the 215-residue chain is HTH-type transcriptional repressor FabR (215 aa).

The region spanning 10-70 is the HTH tetR-type domain; that stretch reads KTRRSLVEAA…TMVDESGLML (61 aa). Positions 33–52 form a DNA-binding region, H-T-H motif; sequence SLREVAREAGIAPTSFYRHF.

As to quaternary structure, homodimer.

Its subcellular location is the cytoplasm. Its function is as follows. Represses the transcription of fabB, involved in unsaturated fatty acid (UFA) biosynthesis. By controlling UFA production, FabR directly influences the physical properties of the membrane bilayer. This Escherichia coli O9:H4 (strain HS) protein is HTH-type transcriptional repressor FabR.